We begin with the raw amino-acid sequence, 283 residues long: E3 ubiquitin-protein ligase MARCHF5 (283 aa).

The RING-CH-type zinc-finger motif lies at Val-9–Val-78. Cys-17, Cys-20, Cys-36, Cys-38, His-46, Cys-49, Cys-68, and Cys-71 together coordinate Zn(2+). 4 helical membrane passes run Phe-102–Val-122, Pro-142–Ile-162, Ile-212–Ser-232, and Thr-241–Gln-261.

It is found in the mitochondrion outer membrane. Its subcellular location is the endoplasmic reticulum membrane. It carries out the reaction S-ubiquitinyl-[E2 ubiquitin-conjugating enzyme]-L-cysteine + [acceptor protein]-L-lysine = [E2 ubiquitin-conjugating enzyme]-L-cysteine + N(6)-ubiquitinyl-[acceptor protein]-L-lysine.. It functions in the pathway protein modification; protein ubiquitination. Functionally, mitochondrial E3 ubiquitin-protein ligase that plays a crucial role in the control of mitochondrial morphology by acting as a positive regulator of mitochondrial fission. May play a role in the prevention of cell senescence acting as a regulator of mitochondrial quality control. In Xenopus laevis (African clawed frog), this protein is E3 ubiquitin-protein ligase MARCHF5 (marchf5).